The chain runs to 1423 residues: Histone-lysine N-methyltransferase ATXR7 (1423 aa).

One can recognise a GYF domain in the interval 263–312; the sequence is HACWFLVDGEGRNHGPHSILELFSWQQHGYVSDAALIRDGENKLRPITLA. Disordered regions lie at residues 923–960, 1057–1097, and 1115–1158; these read CKDH…EGTK, CSIS…SSTD, and LPCH…GRPK. The span at 936-949 shows a compositional bias: basic residues; sequence QKVKKAHTSKLKRK. The span at 950–959 shows a compositional bias: basic and acidic residues; it reads NLSDARDEGT. A compositionally biased stretch (polar residues) spans 1057 to 1071; that stretch reads CSISQKGRKSSQSSI. 2 stretches are compositionally biased toward basic and acidic residues: residues 1115 to 1124 and 1140 to 1157; these read LPCHTSDKLQ and HTTE…DGRP. One can recognise an SET domain in the interval 1266 to 1383; sequence KHLRFQQSKI…AGEEISYNYK (118 aa). S-adenosyl-L-methionine is bound at residue Tyr-1382.

This sequence belongs to the class V-like SAM-binding methyltransferase superfamily. Histone-lysine methyltransferase family. TRX/MLL subfamily. Expressed in the shoot and root apices, vascular tissues and mesophyll cells of rosette leaves.

It localises to the nucleus. The catalysed reaction is L-lysyl(4)-[histone H3] + 3 S-adenosyl-L-methionine = N(6),N(6),N(6)-trimethyl-L-lysyl(4)-[histone H3] + 3 S-adenosyl-L-homocysteine + 3 H(+). It carries out the reaction L-lysyl(36)-[histone H3] + 2 S-adenosyl-L-methionine = N(6),N(6)-dimethyl-L-lysyl(36)-[histone H3] + 2 S-adenosyl-L-homocysteine + 2 H(+). Histone methyltransferase involved in regulation of flowering time. Required for the expression of the flowering repressors FLC and MADS-box genes of the MAF family. Required for histone H3 dimethylation on 'Lys-36' H3K36me2 at the FLC locus. Required for histone H3 trimethylation on 'Lys-4' (H3K4me3) at the FLC locus. Prevents trimethylation on 'Lys-27' (H3K27me3) at the same locus. Involved in the control of seed dormancy and germination. The sequence is that of Histone-lysine N-methyltransferase ATXR7 from Arabidopsis thaliana (Mouse-ear cress).